Consider the following 111-residue polypeptide: Large ribosomal subunit protein eL31 (111 aa).

The protein belongs to the eukaryotic ribosomal protein eL31 family.

This is Large ribosomal subunit protein eL31 (RPL31) from Tetrahymena thermophila (strain SB210).